The chain runs to 287 residues: tRNA-cytidine(32) 2-sulfurtransferase (287 aa).

The PP-loop motif signature appears at 39–44 (SGGKDS). [4Fe-4S] cluster contacts are provided by Cys114, Cys117, and Cys205.

The protein belongs to the TtcA family. In terms of assembly, homodimer. Requires Mg(2+) as cofactor. [4Fe-4S] cluster is required as a cofactor.

The protein localises to the cytoplasm. It carries out the reaction cytidine(32) in tRNA + S-sulfanyl-L-cysteinyl-[cysteine desulfurase] + AH2 + ATP = 2-thiocytidine(32) in tRNA + L-cysteinyl-[cysteine desulfurase] + A + AMP + diphosphate + H(+). It functions in the pathway tRNA modification. Its function is as follows. Catalyzes the ATP-dependent 2-thiolation of cytidine in position 32 of tRNA, to form 2-thiocytidine (s(2)C32). The sulfur atoms are provided by the cysteine/cysteine desulfurase (IscS) system. The protein is tRNA-cytidine(32) 2-sulfurtransferase of Dechloromonas aromatica (strain RCB).